The primary structure comprises 84 residues: Delta-conotoxin-like MVIB (84 aa).

The signal sequence occupies residues 1 to 22 (MKLTCVMIVAVLFLTAWTFVTA). The propeptide occupies 23 to 51 (DDSRYGLKDLFPKERHEMKNPEASKLNQR). 3 cysteine pairs are disulfide-bonded: C54–C69, C61–C73, and C68–C77. P65 carries the 4-hydroxyproline modification. S83 carries the post-translational modification Serine amide.

The protein belongs to the conotoxin O1 superfamily. Expressed by the venom duct.

Its subcellular location is the secreted. Its function is as follows. Delta-conotoxins bind to site 6 of voltage-gated sodium channels (Nav) and inhibit the inactivation process. The chain is Delta-conotoxin-like MVIB from Conus magus (Magical cone).